The primary structure comprises 647 residues: MRLTLLCCTWREERMGEEGSELPVCASCSQSIYDGQYLQALNADWHADCFRCCECSTSLSHQYYEKDGQLFCKKDYWARYGESCHGCSEHITKGLVMVGGELKYHPECFICLACGNFIGDGDTYTLVEHSKLYCGQCYYQTVVTPVIEQILPDSPGSHLPHTVTLVSIPASAHGKRGLSVSIDPPHGPPGCGTEHSHTVRVQGVDPGCMSPDVKNSIHIGDRILEINGTPIRNVPLDEIDLLIQETSRLLQLTLEHDPHDSLGHGPVSDPSPLASPVHTPSGQAGSSARQKPVLRSCSIDTSPGAGSLVSPASQRKDLGRSESLRVVCRPHRIFRPSDLIHGEVLGKGCFGQAIKVTHRETGEVMVMKELIRFDEETQRTFLKEVKVMRCLEHPNVLKFIGVLYKDKRLNFITEYIKGGTLRGIIKSMDSQYPWSQRVSFAKDIASGMAYLHSMNIIHRDLNSHNCLVRENRNVVVADFGLARLMIDEKGQSEDLRSLKKPDRKKRYTVVGNPYWMAPEMINGRSYDEKVDVFSFGIVLCEIIGRVNADPDYLPRTMDFGLNVRGFLDRYCPPNCPPSFFPITVRCCDLDPEKRPSFVKLEQWLETLRMHLAGHLPLGPQLEQLERGFWETYRRGESSLPAHPEVPD.

LIM zinc-binding domains are found at residues 25 to 75 (CASC…CKKD) and 84 to 137 (CHGC…CGQC). Residues 165–258 (LVSIPASAHG…LLQLTLEHDP (94 aa)) form the PDZ domain. Ser-210 is subject to Phosphoserine. Phosphothreonine is present on Thr-229. Positions 256–316 (HDPHDSLGHG…SLVSPASQRK (61 aa)) are disordered. Residues 278-289 (HTPSGQAGSSAR) are compositionally biased toward polar residues. Ser-298, Ser-302, Ser-307, and Ser-310 each carry phosphoserine. Ser-323 carries the post-translational modification Phosphoserine; by MAPKAPK2. Ser-337 bears the Phosphoserine mark. In terms of domain architecture, Protein kinase spans 339 to 604 (LIHGEVLGKG…PSFVKLEQWL (266 aa)). ATP is bound by residues 345–353 (LGKGCFGQA) and Lys-368. Asp-460 is a catalytic residue. At Thr-508 the chain carries Phosphothreonine; by ROCK1 and PAK1.

It belongs to the protein kinase superfamily. TKL Ser/Thr protein kinase family. Interacts (via LIM domain) with the cytoplasmic domain of NRG1. Interacts with NISCH. Interacts with RLIM and RNF6. Self-associates to form homodimers. Interacts with HSP90AA1; this interaction promotes LIMK1 dimerization and subsequent transphosphorylation. Interacts with CDKN1C. Interacts with SSH1. Interacts with ROCK1. Interacts (via LIM zinc-binding domains) with FAM89B/LRAP25 (via LRR repeat). Forms a tripartite complex with CDC42BPA, CDC42BPB and FAM89B/LRAP25. In terms of processing, autophosphorylated. Phosphorylated on Thr-508 by ROCK1 and PAK1, resulting in activation. Phosphorylated by PAK4 which increases the ability of LIMK1 to phosphorylate cofilin. Phosphorylated at Ser-323 by MAPKAPK2 during activation of VEGFA-induced signaling, which results in activation of LIMK1 and promotion of actin reorganization, cell migration, and tubule formation of endothelial cells. Dephosphorylated and inactivated by SSH1. Phosphorylated by CDC42BP. Post-translationally, ubiquitinated. 'Lys-48'-linked polyubiquitination by RNF6 leads to proteasomal degradation through the 26S proteasome, modulating LIMK1 levels in the growth cone and its effect on axonal outgrowth. Also polyubiquitinated by RLIM.

The protein localises to the cytoplasm. It is found in the nucleus. The protein resides in the cytoskeleton. Its subcellular location is the cell projection. It localises to the lamellipodium. The catalysed reaction is L-seryl-[protein] + ATP = O-phospho-L-seryl-[protein] + ADP + H(+). The enzyme catalyses L-threonyl-[protein] + ATP = O-phospho-L-threonyl-[protein] + ADP + H(+). Serine/threonine-protein kinase that plays an essential role in the regulation of actin filament dynamics. Acts downstream of several Rho family GTPase signal transduction pathways. Activated by upstream kinases including ROCK1, PAK1 and PAK4, which phosphorylate LIMK1 on a threonine residue located in its activation loop. LIMK1 subsequently phosphorylates and inactivates the actin binding/depolymerizing factors cofilin-1/CFL1, cofilin-2/CFL2 and destrin/DSTN, thereby preventing the cleavage of filamentous actin (F-actin), and stabilizing the actin cytoskeleton. In this way LIMK1 regulates several actin-dependent biological processes including cell motility, cell cycle progression, and differentiation. Phosphorylates TPPP on serine residues, thereby promoting microtubule disassembly. Stimulates axonal outgrowth and may be involved in brain development. In Rattus norvegicus (Rat), this protein is LIM domain kinase 1 (Limk1).